The primary structure comprises 71 residues: Large ribosomal subunit protein bL31 (71 aa).

Zn(2+) contacts are provided by Cys16, Cys18, Cys36, and Cys39.

Belongs to the bacterial ribosomal protein bL31 family. Type A subfamily. As to quaternary structure, part of the 50S ribosomal subunit. The cofactor is Zn(2+).

In terms of biological role, binds the 23S rRNA. This chain is Large ribosomal subunit protein bL31, found in Thermotoga maritima (strain ATCC 43589 / DSM 3109 / JCM 10099 / NBRC 100826 / MSB8).